A 396-amino-acid chain; its full sequence is Probable circularly permuted 1,3-beta-glucanase YJL171C (396 aa).

The first 19 residues, 1–19 (MLQSIVLSVCMFMLHTVAA), serve as a signal peptide directing secretion. N-linked (GlcNAc...) asparagine glycosylation is found at Asn51, Asn99, Asn122, Asn146, Asn174, Asn219, and Asn249. The ExDxxE motif signature appears at 259–264 (EYDIFE). 4 N-linked (GlcNAc...) asparagine glycosylation sites follow: Asn267, Asn300, Asn328, and Asn346. Residue Asn368 is the site of GPI-anchor amidated asparagine attachment. Positions 369 to 396 (GVALTKMQNGVWYYILAIFTAFTQVVLI) are cleaved as a propeptide — removed in mature form.

The protein belongs to the PGA52 family. In terms of processing, extensively N-glycosylated.

The protein localises to the cell membrane. It catalyses the reaction Hydrolysis of (1-&gt;3)-beta-D-glucosidic linkages in (1-&gt;3)-beta-D-glucans.. Its function is as follows. Probable circularly permuted 1,3-beta-glucanase involved in cell wall modification through beta-1,3-glucan network alterations such as increased branching or remodeling. The polypeptide is Probable circularly permuted 1,3-beta-glucanase YJL171C (TOH1) (Saccharomyces cerevisiae (strain ATCC 204508 / S288c) (Baker's yeast)).